The primary structure comprises 507 residues: Probable Xaa-Pro aminopeptidase HCAG_02413 (507 aa).

Mn(2+)-binding residues include Asp283, Asp294, Glu431, and Glu469.

Belongs to the peptidase M24B family. Mn(2+) is required as a cofactor.

The enzyme catalyses Release of any N-terminal amino acid, including proline, that is linked to proline, even from a dipeptide or tripeptide.. Its function is as follows. Catalyzes the removal of a penultimate prolyl residue from the N-termini of peptides. This Ajellomyces capsulatus (strain NAm1 / WU24) (Darling's disease fungus) protein is Probable Xaa-Pro aminopeptidase HCAG_02413.